Reading from the N-terminus, the 154-residue chain is Protein X (154 aa).

The interval 68–117 (PCALRFTSARYMETAMNTSHHLPRQLYKWTLGLFVMSTTGVEKYFKDCVF) is mitochondrial targeting sequence.

It belongs to the orthohepadnavirus protein X family. As to quaternary structure, may form homodimer. May interact with host CEBPA, CFLAR, CREB1, DDB1, E4F1, HBXIP, HSPD1/HSP60, NFKBIA, POLR2E and SMAD4. Interacts with host SMC5-SMC6 complex and induces its degradation. Interacts with host TRPC4AP; leading to prevent ubiquitination of TRPC4AP. Interacts with host PLSCR1; this interaction promotes ubiquitination and degradation of HBx and impairs HBx-mediated cell proliferation. In terms of processing, a fraction may be phosphorylated in insect cells and HepG2 cells, a human hepatoblastoma cell line. Phosphorylated in vitro by host protein kinase C or mitogen-activated protein kinase. N-acetylated in insect cells.

The protein localises to the host cytoplasm. The protein resides in the host nucleus. It localises to the host mitochondrion. Functionally, multifunctional protein that plays a role in silencing host antiviral defenses and promoting viral transcription. Does not seem to be essential for HBV infection. May be directly involved in development of cirrhosis and liver cancer (hepatocellular carcinoma). Most of cytosolic activities involve modulation of cytosolic calcium. The effect on apoptosis is controversial depending on the cell types in which the studies have been conducted. May induce apoptosis by localizing in mitochondria and causing loss of mitochondrial membrane potential. May also modulate apoptosis by binding host CFLAR, a key regulator of the death-inducing signaling complex (DISC). Promotes viral transcription by using the host E3 ubiquitin ligase DDB1 to target the SMC5-SMC6 complex to proteasomal degradation. This host complex would otherwise bind to viral episomal DNA, and prevents its transcription. Moderately stimulates transcription of many different viral and cellular transcription elements. Promoters and enhancers stimulated by HBx contain DNA binding sites for NF-kappa-B, AP-1, AP-2, c-EBP, ATF/CREB, or the calcium-activated factor NF-AT. The protein is Protein X of Hepatitis B virus genotype G (isolate IG29227/2000) (HBV-G).